Reading from the N-terminus, the 393-residue chain is MTEGRKPHINVGTIGHVDHGKTTLTAALTTVLTRRLSGANKVVKYDEIDKAPEERARGITISTAHVEYETEGRHYAHVDCPGHADYIKNMITGAAQMDVAILVVSATDGAMPQTREHILLAKQVGVKDIVTWINKCDVVEDEEMLSIVEMEVRELLSNYGYDGDGVDVVRGSAVKALEESSDGPWSEKIMELVGALEKIELPVREKDKPFLMSVEDVFSIPGRGTVVTGRIERGVIKVGDKVDIVGLRDLQSTVCTGVEMFHKALETGEAGDNAGILLRGIKKEDVERGQVLSAPGQIRSYKAFKAEVYILKKEEGGRHTPFFSNYQPQFYVRTTDVTGSIKLPSGVEMVMPGDNLSIEVALDKPVALDKGLRFAVREGGRTVGSGIITEILE.

The tr-type G domain maps to 6–204 (KPHINVGTIG…ALEKIELPVR (199 aa)). A G1 region spans residues 15 to 22 (GHVDHGKT). 15–22 (GHVDHGKT) contributes to the GTP binding site. Position 22 (Thr22) interacts with Mg(2+). The tract at residues 58–62 (GITIS) is G2. The G3 stretch occupies residues 79 to 82 (DCPG). Residues 79–83 (DCPGH) and 134–137 (NKCD) each bind GTP. The interval 134-137 (NKCD) is G4. The tract at residues 172–174 (SAV) is G5.

This sequence belongs to the TRAFAC class translation factor GTPase superfamily. Classic translation factor GTPase family. EF-Tu/EF-1A subfamily. Monomer.

The protein resides in the cytoplasm. It carries out the reaction GTP + H2O = GDP + phosphate + H(+). In terms of biological role, GTP hydrolase that promotes the GTP-dependent binding of aminoacyl-tRNA to the A-site of ribosomes during protein biosynthesis. This chain is Elongation factor Tu, found in Anaplasma marginale (strain St. Maries).